A 272-amino-acid chain; its full sequence is Shikimate dehydrogenase (NADP(+)) (272 aa).

Residues Ser14–Ser16 and Thr61 contribute to the shikimate site. Residue Lys65 is the Proton acceptor of the active site. Position 77 (Glu77) interacts with NADP(+). Asn86 and Asp102 together coordinate shikimate. Residues Gly126–Ala130, Asn149–Arg154, and Met213 each bind NADP(+). A shikimate-binding site is contributed by Tyr215. Gly237 is a binding site for NADP(+).

The protein belongs to the shikimate dehydrogenase family. In terms of assembly, homodimer.

The catalysed reaction is shikimate + NADP(+) = 3-dehydroshikimate + NADPH + H(+). The protein operates within metabolic intermediate biosynthesis; chorismate biosynthesis; chorismate from D-erythrose 4-phosphate and phosphoenolpyruvate: step 4/7. Functionally, involved in the biosynthesis of the chorismate, which leads to the biosynthesis of aromatic amino acids. Catalyzes the reversible NADPH linked reduction of 3-dehydroshikimate (DHSA) to yield shikimate (SA). The chain is Shikimate dehydrogenase (NADP(+)) from Escherichia coli O81 (strain ED1a).